The sequence spans 344 residues: MVKVGIVGGTGYTGVELLRLLAQHPQAEVVVITSRSEAGMPVAEMYPNLRGHYDGLAFSVPDVKTLGACDVVFFATPHGVAHALAGELLAAGTKVIDLSADFRLQDPVEWAKWYGQPHGAPQLLQDAVYGLPEVNREQIKNARLIAVPGCYPTATQLGFLPLLEAGIADNTRLIADCKSGVSGAGRGLSIGSLYSEANESFKAYAVKGHRHLPEITQGLRRAAGGDIGLTFVPHLVPMIRGIHSTLYATVADRSVDLQALFEKRYADEPFVDVMPAGSHPETRSVRGANVCRIAVHRPQGGDLVVVLSVIDNLVKGASGQAVQNMNILFGLDERAGLSHAGMMP.

Cys-150 is a catalytic residue.

This sequence belongs to the NAGSA dehydrogenase family. Type 1 subfamily.

The protein resides in the cytoplasm. It catalyses the reaction N-acetyl-L-glutamate 5-semialdehyde + phosphate + NADP(+) = N-acetyl-L-glutamyl 5-phosphate + NADPH + H(+). The protein operates within amino-acid biosynthesis; L-arginine biosynthesis; N(2)-acetyl-L-ornithine from L-glutamate: step 3/4. In terms of biological role, catalyzes the NADPH-dependent reduction of N-acetyl-5-glutamyl phosphate to yield N-acetyl-L-glutamate 5-semialdehyde. This chain is N-acetyl-gamma-glutamyl-phosphate reductase, found in Pseudomonas savastanoi pv. phaseolicola (strain 1448A / Race 6) (Pseudomonas syringae pv. phaseolicola (strain 1448A / Race 6)).